The sequence spans 214 residues: Eukaryotic translation initiation factor 4E-1B (214 aa).

Residues 53 to 54 (WQ), 99 to 100 (WE), 154 to 159 (RAKGDK), and 202 to 204 (TKS) contribute to the mRNA site.

As to expression, ovary, muscle and testis.

The protein resides in the cytoplasm. Its subcellular location is the nucleus. Its function is as follows. Does not appear to be a mRNA-cap-binding protein. The sequence is that of Eukaryotic translation initiation factor 4E-1B from Danio rerio (Zebrafish).